We begin with the raw amino-acid sequence, 511 residues long: Glutamate/gamma-aminobutyrate antiporter (511 aa).

Topologically, residues 1–14 (MATLVQTGKAKQLT) are cytoplasmic. A helical membrane pass occupies residues 15 to 35 (LLGFFAITASMVMAVYEYPTF). Residues 36-41 (ATSGFS) are Periplasmic-facing. A helical membrane pass occupies residues 42–62 (LVFFLLLGGILWFIPVGLCAA). At 63–93 (EMATVDGWEEGGVFAWVSNTLGPRWGFAAIS) the chain is on the cytoplasmic side. The chain crosses the membrane as a helical span at residues 94 to 114 (FGYLQIAIGFIPMLYFVLGAL). Topologically, residues 115 to 127 (SYILKWPALNEDP) are periplasmic. Residues 128–148 (ITKTIAALIILWALALTQFGG) form a helical membrane-spanning segment. At 149–157 (TKYTARIAK) the chain is on the cytoplasmic side. Residues 158–178 (VGFFAGILLPAFILIALAAIY) form a helical membrane-spanning segment. Over 179–200 (LHSGAPVAIEMDSKTFFPDFSK) the chain is Periplasmic. A helical transmembrane segment spans residues 201 to 221 (VGTLVVFVAFILSYMGVEASA). Residues 222–239 (THVNEMSNPGRDYPLAML) are Cytoplasmic-facing. Residues 240–260 (LLMVAAICLSSVGGLSIAMVI) traverse the membrane as a helical segment. Over 261 to 291 (PGNEINLSAGVMQTFTVLMSHVAPEIEWTVR) the chain is Periplasmic. A helical membrane pass occupies residues 292–312 (VISALLLLGVLAEIASWIVGP). At 313-335 (SRGMYVTAQKNLLPAAFAKMNKN) the chain is on the cytoplasmic side. The chain crosses the membrane as a helical span at residues 336–356 (GVPVTLVISQLVITSIALIIL). At 357–366 (TNTGGGNNMS) the chain is on the periplasmic side. Residues 367 to 387 (FLIALALTVVIYLCAYFMLFI) traverse the membrane as a helical segment. Residues 388–412 (GYIVLVLKHPDLKRTFNIPGGKGVK) lie on the Cytoplasmic side of the membrane. Residues 413–433 (LVVAIVGLLTSIMAFIVSFLP) traverse the membrane as a helical segment. Over 434 to 445 (PDNIQGDSTDMY) the chain is Periplasmic. A helical membrane pass occupies residues 446 to 466 (VELLVVSFLVVLALPFILYAV). Topologically, residues 467–511 (HDRKGKANTGVTLEPINSQNAPKGHFFLHPRARSPHYIVMNDKKH) are cytoplasmic.

It belongs to the amino acid-polyamine-organocation (APC) superfamily. Glutamate:GABA antiporter (GGA) (TC 2.A.3.7) family.

The protein localises to the cell inner membrane. The enzyme catalyses 4-aminobutanoate(in) + L-glutamate(out) = 4-aminobutanoate(out) + L-glutamate(in). With respect to regulation, shows pH-dependent activity. The glutamate analog L-trans-pyrrolidine-2,4-dicarboxylic acid (L-PDC) blocks the uptake of glutamate by selective inhibition. In terms of biological role, involved in glutaminase-dependent acid resistance. Exchanges extracellular glutamate (Glu) for intracellular gamma-aminobutyric acid (GABA) under acidic conditions. The ability to survive the extremely acidic conditions of the stomach is essential for successful colonization of the host by commensal and pathogenic bacteria. This is Glutamate/gamma-aminobutyrate antiporter (gadC) from Escherichia coli O157:H7.